The following is a 773-amino-acid chain: Histone-lysine N-methyltransferase mes-2 (773 aa).

The segment covering 1 to 13 has biased composition (polar residues); sequence MSNSEPSTSTPSG. Positions 1 to 33 are disordered; the sequence is MSNSEPSTSTPSGKTKKRGKKCETSMGKSKKSK. Positions 1 to 194 are interaction with mes-6; the sequence is MSNSEPSTST…TPDQLRLTHM (194 aa). In terms of domain architecture, CXC spans 505 to 614; it reads IREDDMRDSQ…SNIIKCRNFG (110 aa). One can recognise an SET domain in the interval 616–737; it reads TRMIQKRTYC…ISEELTFDYS (122 aa). Residues 749-773 form a disordered region; the sequence is VQTKERSEKPSRPKSQKLSKPMTSE. A compositionally biased stretch (basic and acidic residues) spans 750–759; the sequence is QTKERSEKPS.

It belongs to the class V-like SAM-binding methyltransferase superfamily. Histone-lysine methyltransferase family. EZ subfamily. As to quaternary structure, interacts directly with mes-6 via its N-terminal domain. Forms a heterotrimeric complex with mes-3 and mes-6. Does not interact with mes-4. As to expression, in adults, it is predominantly expressed in the germline, and weakly expressed in intestinal cells. Expressed in the hypoderm.

It is found in the nucleus. It carries out the reaction L-lysyl(27)-[histone H3] + 3 S-adenosyl-L-methionine = N(6),N(6),N(6)-trimethyl-L-lysyl(27)-[histone H3] + 3 S-adenosyl-L-homocysteine + 3 H(+). In terms of biological role, polycomb group (PcG) protein. Catalytic subunit of a the mes-2/mes-3/mes-6 complex, which methylates 'Lys-27' of histone H3, leading to transcriptional repression of the affected target genes. PcG proteins act by forming multiprotein complexes, which are required to maintain the transcriptionally repressive state of homeotic genes throughout development. In association with the nfya-1-NF-Y complex, may play a role in repressing the expression of the homeobox protein egl-5 in tissues such as the head. PcG proteins are not required to initiate repression, but to maintain it during later stages of development. The mes-2/mes-3/mes-6 complex may participate in the global inactivation of the X chromosomes in germline cells. This complex is required to exclude mes-4 from the inactivated X-chromosomes in germline cells. Required for small-RNA-induced H3K27 trimethylation. Involved in the negative regulation of lifespan in a germline-independent fashion. The sequence is that of Histone-lysine N-methyltransferase mes-2 from Caenorhabditis elegans.